The following is a 287-amino-acid chain: Ciliary microtubule inner protein 6 (287 aa).

Basic and acidic residues-rich tracts occupy residues 1–15 (MEEK…KIED) and 25–34 (EEIKHEEKPG). The disordered stretch occupies residues 1-42 (MEEKEDKHQQHKIEDAAITYVSENEEIKHEEKPGKSIHHSKS). The mn 1 stretch occupies residues 128–160 (GIVPLASPGTSAELQNNFIEYISFIHQYDARKT). Residues 179-287 (KPGSRPTVPK…PLNPPIKKSE (109 aa)) form a disordered region. Basic and acidic residues-rich tracts occupy residues 203 to 212 (EQSKKTEKGN) and 232 to 245 (LEPK…DVRQ). Positions 213–246 (SAESRMISPGLCQQNSQELLEPKTHLSETDVRQA) are mn 2.

It localises to the cell projection. The protein resides in the cilium. The polypeptide is Ciliary microtubule inner protein 6 (Homo sapiens (Human)).